The primary structure comprises 199 residues: Recombination protein RecR (199 aa).

The C4-type zinc finger occupies C56–C71. Positions Q79–P173 constitute a Toprim domain.

This sequence belongs to the RecR family.

In terms of biological role, may play a role in DNA repair. It seems to be involved in an RecBC-independent recombinational process of DNA repair. It may act with RecF and RecO. In Gloeothece citriformis (strain PCC 7424) (Cyanothece sp. (strain PCC 7424)), this protein is Recombination protein RecR.